We begin with the raw amino-acid sequence, 101 residues long: Small ribosomal subunit protein uS10 (101 aa).

Belongs to the universal ribosomal protein uS10 family. Part of the 30S ribosomal subunit.

Involved in the binding of tRNA to the ribosomes. This chain is Small ribosomal subunit protein uS10, found in Mycobacteroides abscessus (strain ATCC 19977 / DSM 44196 / CCUG 20993 / CIP 104536 / JCM 13569 / NCTC 13031 / TMC 1543 / L948) (Mycobacterium abscessus).